The chain runs to 350 residues: Uroporphyrinogen decarboxylase (350 aa).

Residues Arg27–Arg31, Phe46, Asp76, Tyr152, Ser207, and His321 contribute to the substrate site.

It belongs to the uroporphyrinogen decarboxylase family. In terms of assembly, homodimer.

The protein resides in the cytoplasm. It carries out the reaction uroporphyrinogen III + 4 H(+) = coproporphyrinogen III + 4 CO2. Its pathway is porphyrin-containing compound metabolism; protoporphyrin-IX biosynthesis; coproporphyrinogen-III from 5-aminolevulinate: step 4/4. Catalyzes the decarboxylation of four acetate groups of uroporphyrinogen-III to yield coproporphyrinogen-III. This chain is Uroporphyrinogen decarboxylase, found in Listeria welshimeri serovar 6b (strain ATCC 35897 / DSM 20650 / CCUG 15529 / CIP 8149 / NCTC 11857 / SLCC 5334 / V8).